A 326-amino-acid chain; its full sequence is N-acetyl-gamma-glutamyl-phosphate reductase (326 aa).

Cysteine 155 is an active-site residue.

Belongs to the NAGSA dehydrogenase family. Type 1 subfamily.

Its subcellular location is the cytoplasm. It carries out the reaction N-acetyl-L-glutamate 5-semialdehyde + phosphate + NADP(+) = N-acetyl-L-glutamyl 5-phosphate + NADPH + H(+). It functions in the pathway amino-acid biosynthesis; L-arginine biosynthesis; N(2)-acetyl-L-ornithine from L-glutamate: step 3/4. In terms of biological role, catalyzes the NADPH-dependent reduction of N-acetyl-5-glutamyl phosphate to yield N-acetyl-L-glutamate 5-semialdehyde. The sequence is that of N-acetyl-gamma-glutamyl-phosphate reductase from Shewanella loihica (strain ATCC BAA-1088 / PV-4).